A 289-amino-acid chain; its full sequence is Ribosomal protein L11 methyltransferase (289 aa).

Residues Thr142, Gly163, Asp185, and Asn226 each contribute to the S-adenosyl-L-methionine site.

It belongs to the methyltransferase superfamily. PrmA family.

It is found in the cytoplasm. It carries out the reaction L-lysyl-[protein] + 3 S-adenosyl-L-methionine = N(6),N(6),N(6)-trimethyl-L-lysyl-[protein] + 3 S-adenosyl-L-homocysteine + 3 H(+). Functionally, methylates ribosomal protein L11. The polypeptide is Ribosomal protein L11 methyltransferase (Legionella pneumophila (strain Corby)).